Reading from the N-terminus, the 409-residue chain is Tetracenomycin polyketide synthase ketoacyl synthase beta subunit (409 aa).

The Ketosynthase family 3 (KS3) domain occupies 4 to 407; it reads PAPVVVTGLG…GFNSALVVRR (404 aa).

This sequence belongs to the thiolase-like superfamily. Beta-ketoacyl-ACP synthases family. The tetracenomycin polyketide synthase (TCM PKS) is composed of a ketosynthase complex (TcmKL), an acyl carrier protein (TcmM), a cyclase (TcmN) and a probable second cyclase (TcmJ). TcmK and TcmL form a heterodimeric complex.

It carries out the reaction 10 malonyl-CoA + 8 H(+) = tetracenomycin F2 + 10 CO2 + 10 CoA + 2 H2O. It participates in antibiotic biosynthesis; tetracenomycin C biosynthesis. Functionally, involved in the biosynthesis of tetracenomycin C (TCM C). Part of a type II polyketide synthase (PKS) that catalyzes the synthesis of tetracenomycin F2 (TCM F2), a precursor of TCM C, from malonyl-CoA. TcmK and TcmL form a heterodimeric alpha-beta complex that catalyzes the condensation reactions between the growing acyl-enzyme chain and the malonyl-CoA extender units. The protein is Tetracenomycin polyketide synthase ketoacyl synthase beta subunit of Streptomyces glaucescens.